Here is a 109-residue protein sequence, read N- to C-terminus: Aquaporin-2 (109 aa).

Residues 1–6 lie on the Cytoplasmic side of the membrane; that stretch reads SIAFSR. A helical transmembrane segment spans residues 7–27; the sequence is AVFSEFLATLLFVFFGLGSAL. Residues 28–35 lie on the Extracellular side of the membrane; it reads NWPQALPS. The chain crosses the membrane as a helical span at residues 36 to 54; that stretch reads VLQIAMAFGLAIGTLVQTL. The Cytoplasmic portion of the chain corresponds to 55–59; that stretch reads GHISG. The segment at residues 60-69 is an intramembrane region (discontinuously helical); that stretch reads AHINPAVTVA. The short motif at 63 to 65 is the NPA 1 element; that stretch reads NPA. The Cytoplasmic segment spans residues 70–80; it reads CLVGCHVSFLR. Residues 81 to 102 traverse the membrane as a helical segment; that stretch reads ATFYVAAQLLGAVAGAALLHEL. The Extracellular segment spans residues 103–109; sequence TPPDIRG.

This sequence belongs to the MIP/aquaporin (TC 1.A.8) family. As to quaternary structure, homotetramer. Serine phosphorylation is necessary and sufficient for expression at the apical membrane. Endocytosis is not phosphorylation-dependent. In terms of processing, N-glycosylated.

The protein resides in the apical cell membrane. It localises to the basolateral cell membrane. The protein localises to the cell membrane. It is found in the cytoplasmic vesicle membrane. Its subcellular location is the golgi apparatus. The protein resides in the trans-Golgi network membrane. The enzyme catalyses H2O(in) = H2O(out). The catalysed reaction is glycerol(in) = glycerol(out). Forms a water-specific channel that provides the plasma membranes of renal collecting duct with high permeability to water, thereby permitting water to move in the direction of an osmotic gradient. Plays an essential role in renal water homeostasis. Could also be permeable to glycerol. The protein is Aquaporin-2 of Amblysomus hottentotus (Hottentot golden mole).